Reading from the N-terminus, the 388-residue chain is MNLHEYQAKALFAEYGLPVSEGYACDTPQEAVEAAGRIGGNMWVVKCQVHAGGRGKAGGVKVTGDKEEIRAFAEKWLGKNLVTYQTDENGQPVAKILVESCTDIANELYLGAVVDRATRRVVFMASTEGGVEIEKVAEETPELIHKAIIDPIAGPQPFQARDLGFKLGLNPTQMKQFTKIFMGLAQMFLDHDFALLEINPLVITTEGNLHCLDGKIGVDGNALFRQPKIKDMHDPSQDDAREAHAAKFELNYVALDGNVGCMVNGAGLAMGTMDIVNLHGGKPANFLDVGGGATKERVSEAFKIILSDSNVKAVLVNIFGGIVRCDMIAEGIIGAVKEVGVKVPVVVRLEGTNAELGAKVLAESGLDIIAAKSLTDAAQQVVKAAEGK.

An ATP-grasp domain is found at 9-244 (KALFAEYGLP…PSQDDAREAH (236 aa)). ATP contacts are provided by residues Lys46, 53 to 55 (GRG), Glu99, Thr102, and Glu107. Positions 199 and 213 each coordinate Mg(2+). Substrate-binding positions include Asn264 and 321–323 (GIV).

It belongs to the succinate/malate CoA ligase beta subunit family. Heterotetramer of two alpha and two beta subunits. Requires Mg(2+) as cofactor.

It carries out the reaction succinate + ATP + CoA = succinyl-CoA + ADP + phosphate. The catalysed reaction is GTP + succinate + CoA = succinyl-CoA + GDP + phosphate. The protein operates within carbohydrate metabolism; tricarboxylic acid cycle; succinate from succinyl-CoA (ligase route): step 1/1. In terms of biological role, succinyl-CoA synthetase functions in the citric acid cycle (TCA), coupling the hydrolysis of succinyl-CoA to the synthesis of either ATP or GTP and thus represents the only step of substrate-level phosphorylation in the TCA. The beta subunit provides nucleotide specificity of the enzyme and binds the substrate succinate, while the binding sites for coenzyme A and phosphate are found in the alpha subunit. The chain is Succinate--CoA ligase [ADP-forming] subunit beta from Shewanella amazonensis (strain ATCC BAA-1098 / SB2B).